The sequence spans 423 residues: UBX domain-containing protein 1 (423 aa).

Residues 44-167 (QTDDQKDRRE…EVTDPSDPNS (124 aa)) are disordered. Residues 46–66 (DDQKDRREEAHWNRQQEKALK) are compositionally biased toward basic and acidic residues. The segment covering 69 to 79 (AFSTNSSNKAI) has biased composition (polar residues). Low complexity predominate over residues 115–130 (SSRSGSGNNSRFMSFS). Phosphoserine is present on residues Ser128, Ser210, and Ser224. Positions 232 to 297 (KVTREITFWK…VYKKLDESYK (66 aa)) constitute an SEP domain. Lys241 participates in a covalent cross-link: Glycyl lysine isopeptide (Lys-Gly) (interchain with G-Cter in ubiquitin). A disordered region spans residues 299–348 (PTRKLGGFSGQGQRLGSPIPGESSPAEVPKNETPAAQEQPMPDNEPKQGD). Phosphoserine occurs at positions 315, 321, and 322. The residue at position 331 (Thr331) is a Phosphothreonine. In terms of domain architecture, UBX spans 344 to 421 (PKQGDTSIQI…DLLNSVVVQR (78 aa)).

Forms a complex composed of CDC48, NPL4, UFD1, DOA1, SHP1 and deubiquitinase OTU1. Interacts with CDC48.

The protein resides in the nucleus. Its subcellular location is the cytoplasm. Involved in CDC48-dependent protein degradation through the ubiquitin/proteasome pathway. Direct or indirect positive regulator of GLC7 activity. The sequence is that of UBX domain-containing protein 1 (SHP1) from Saccharomyces cerevisiae (strain ATCC 204508 / S288c) (Baker's yeast).